The primary structure comprises 316 residues: Thymidylate synthase (316 aa).

DUMP is bound by residues arginine 23 and 178 to 179; that span reads RR. Cysteine 198 functions as the Nucleophile in the catalytic mechanism. Residues 218–221, asparagine 229, and 259–261 each bind dUMP; these read RSGD and HIY. Aspartate 221 is a binding site for (6R)-5,10-methylene-5,6,7,8-tetrahydrofolate. Position 315 (alanine 315) interacts with (6R)-5,10-methylene-5,6,7,8-tetrahydrofolate.

This sequence belongs to the thymidylate synthase family. Bacterial-type ThyA subfamily. In terms of assembly, homodimer.

Its subcellular location is the cytoplasm. The enzyme catalyses dUMP + (6R)-5,10-methylene-5,6,7,8-tetrahydrofolate = 7,8-dihydrofolate + dTMP. Its pathway is pyrimidine metabolism; dTTP biosynthesis. In terms of biological role, catalyzes the reductive methylation of 2'-deoxyuridine-5'-monophosphate (dUMP) to 2'-deoxythymidine-5'-monophosphate (dTMP) while utilizing 5,10-methylenetetrahydrofolate (mTHF) as the methyl donor and reductant in the reaction, yielding dihydrofolate (DHF) as a by-product. This enzymatic reaction provides an intracellular de novo source of dTMP, an essential precursor for DNA biosynthesis. This chain is Thymidylate synthase, found in Pediococcus pentosaceus (strain ATCC 25745 / CCUG 21536 / LMG 10740 / 183-1w).